The sequence spans 447 residues: Glutamate--tRNA ligase 1 (447 aa).

The 'HIGH' region signature appears at 10-20 (PSPTGMLHVGN). The 'KMSKS' region motif lies at 240 to 244 (KISKR). Lys243 serves as a coordination point for ATP.

This sequence belongs to the class-I aminoacyl-tRNA synthetase family. Glutamate--tRNA ligase type 1 subfamily. In terms of assembly, monomer.

The protein localises to the cytoplasm. It catalyses the reaction tRNA(Glu) + L-glutamate + ATP = L-glutamyl-tRNA(Glu) + AMP + diphosphate. Functionally, catalyzes the attachment of glutamate to tRNA(Glu) in a two-step reaction: glutamate is first activated by ATP to form Glu-AMP and then transferred to the acceptor end of tRNA(Glu). This chain is Glutamate--tRNA ligase 1, found in Rickettsia prowazekii (strain Madrid E).